Consider the following 475-residue polypeptide: Beta-amyrin 28-monooxygenase (475 aa).

The chain crosses the membrane as a helical span at residues 2 to 22 (YLTILFLFVSSILLSLMFLLR). Cysteine 422 serves as a coordination point for heme.

The protein belongs to the cytochrome P450 family. The cofactor is heme.

It localises to the membrane. It carries out the reaction beta-amyrin + 3 reduced [NADPH--hemoprotein reductase] + 3 O2 = oleanolate + 3 oxidized [NADPH--hemoprotein reductase] + 4 H2O + 4 H(+). In terms of biological role, catalyzes the oxidation of the methyl group to a carboxyl group at the C-28 position of beta-amyrin to form oleanolate. The sequence is that of Beta-amyrin 28-monooxygenase from Barbarea vulgaris (Yellow rocket).